The following is a 374-amino-acid chain: Fatty acid conjugase FAC2 A (374 aa).

2 helical membrane passes run 50–70 (IIVT…LPGF) and 74–94 (IVWP…WMIG). Residues 95–99 (HECGH) carry the Histidine box-1 motif. Positions 131-135 (HRNHH) match the Histidine box-2 motif. 3 consecutive transmembrane segments (helical) span residues 168–188 (MGLM…YIMF), 219–239 (VLFS…IVMV), and 246–266 (FYVY…ATYL). Residues 306-310 (HVIHH) carry the Histidine box-3 motif.

It belongs to the fatty acid desaturase type 1 family. Expressed exclusively in the developing seeds. Not detected in leaves or flower buds.

The protein resides in the microsome membrane. It catalyses the reaction a (9Z,12Z)-octadecadienoyl-containing glycerolipid + AH2 + O2 = a (8E,10E,12Z)-octadecatrienoyl-containing glycerolipid + A + 2 H2O. It functions in the pathway lipid metabolism; polyunsaturated fatty acid biosynthesis. Its function is as follows. Fatty acid conjugase converting 18:2(9Z, 12Z) to calendic acid 18:3(8E, 10E, 12Z). Converts alpha-linolenic acid (18:3(9Z, 12Z, 15Z)) into 18:4(8E, 10E, 12Z, 15Z). Also has weak activity on the mono-unsaturates 16:1(9Z) and 18:1(9Z) producing two conjugated double bonds at delta(8) and delta(10) position. This Calendula officinalis (Pot marigold) protein is Fatty acid conjugase FAC2 A.